The primary structure comprises 95 residues: FXYD domain-containing ion transport regulator 6 (95 aa).

Residues 1–18 (MELVLVFLCSLLAPMVLA) form the signal peptide. Topologically, residues 19–35 (STAEKEKEMDPFHYDYQ) are extracellular. Residues 36 to 58 (TLRIGGLVFAVVLFSVGILLILS) traverse the membrane as a helical segment. The Cytoplasmic portion of the chain corresponds to 59 to 95 (RRCKCSFNQKPRAPGDEEAQVENLITANATEPQKAEN).

It belongs to the FXYD family. As to quaternary structure, regulatory subunit of the sodium/potassium-transporting ATPase which is composed of a catalytic alpha subunit, a non-catalytic beta subunit and an additional regulatory subunit. The regulatory subunit, a member of the FXYD protein family, modulates the enzymatic activity in a tissue- and isoform-specific way by changing affinities of the Na+/K+-ATPase toward Na(+), K(+) or ATP.

The protein localises to the cell membrane. In terms of biological role, associates with and regulates the activity of the sodium/potassium-transporting ATPase (NKA) which catalyzes the hydrolysis of ATP coupled with the exchange of Na(+) and K(+) ions across the plasma membrane. Reduces the apparent affinity for intracellular Na(+) with no change in the apparent affinity for extracellular K(+). In addition to modulating NKA kinetics, may also function as a regulator of NKA localization to the plasma membrane. This Macaca fascicularis (Crab-eating macaque) protein is FXYD domain-containing ion transport regulator 6 (FXYD6).